A 515-amino-acid chain; its full sequence is Maturase K (515 aa).

This sequence belongs to the intron maturase 2 family. MatK subfamily.

The protein resides in the plastid. Its subcellular location is the chloroplast. In terms of biological role, usually encoded in the trnK tRNA gene intron. Probably assists in splicing its own and other chloroplast group II introns. This chain is Maturase K, found in Pinus leiophylla (Chihuahua pine).